Consider the following 199-residue polypeptide: Ribosome maturation factor RimM (199 aa).

The PRC barrel domain maps to 93 to 169; the sequence is DDEYYHADLI…IELPDEIDGE (77 aa). Residues 164–199 are disordered; it reads DEIDGEDRASADESASAEDDAAAPNSARHPRESGDP.

It belongs to the RimM family. In terms of assembly, binds ribosomal protein uS19.

It localises to the cytoplasm. An accessory protein needed during the final step in the assembly of 30S ribosomal subunit, possibly for assembly of the head region. Essential for efficient processing of 16S rRNA. May be needed both before and after RbfA during the maturation of 16S rRNA. It has affinity for free ribosomal 30S subunits but not for 70S ribosomes. The polypeptide is Ribosome maturation factor RimM (Bradyrhizobium sp. (strain ORS 278)).